We begin with the raw amino-acid sequence, 1040 residues long: Multidrug resistance protein MdtB (1040 aa).

12 consecutive transmembrane segments (helical) span residues 16-36 (FIMR…AGII), 342-362 (DTQF…YLFL), 369-389 (IIPG…MVFL), 396-416 (LTLM…IVVI), 440-460 (IGFT…PLLF), 472-492 (FAVT…TLTP), 537-557 (WLTL…WVFI), 863-883 (LGST…VLGV), 888-908 (FIHP…ALLA), 911-931 (LAGS…IGIV), 968-988 (ILMT…STGV), and 998-1018 (IGMV…TPVI).

The protein belongs to the resistance-nodulation-cell division (RND) (TC 2.A.6) family. MdtB subfamily. As to quaternary structure, part of a tripartite efflux system composed of MdtA, MdtB and MdtC. MdtB forms a heteromultimer with MdtC.

It localises to the cell inner membrane. This Klebsiella pneumoniae subsp. pneumoniae (strain ATCC 700721 / MGH 78578) protein is Multidrug resistance protein MdtB.